Here is a 135-residue protein sequence, read N- to C-terminus: Salivary protein 15 Iper-1 (135 aa).

An N-terminal signal peptide occupies residues 1–22 (MESFVAMKVVCILFLFVVAAEA). N-linked (GlcNAc...) asparagine glycosylation is found at N93 and N104. The interval 116–135 (GPNKQTCADKSKCVGHIPGC) is CD4-binding.

The protein belongs to the salp15 family. Interacts with host CD4. Interacts with host DC-SIGN (CD209). In terms of assembly, (Microbial infection) Interacts with Borrelia outer surface protein C (OspC). As to expression, expressed in salivary glands from feeding female ticks. Highly expressed 4 days after start of feeding.

It is found in the secreted. Functionally, salivary tick protein that downregulates host immune system by binding to both dendritic cells, and CD4(+) T cells. Specifically binds to the CD4 coreceptor on T cells. This interaction prevents the activation of the Src kinase, Lck, and its downstream substrate Zap-70, and results in deficient activation of PLCgamma1, the repression of calcium fluxes triggered by T-cell antigen receptor (TCR) ligation, and a subsequent reduction in interleukin-2 production. This salivary protein also binds to DC-SIGN (CD209) on dendritic cells (DC) and activates the Raf-1 kinase/MEK signaling pathway that results in down-regulating expression of pro-inflammatory cytokines. Furthermore, it inhibits T cell proliferation induced by DCs. It also inhibits in vitro keratinocyte inflammation induced by Borrelia burgdorferi or by the major outer surface protein (OspC) of Borrelia. In addition, it downregulates chemokines and monocyte chemoattractant protein 1, as well as several antimicrobial peptides such as defensins, cathelicidin, psoriasin, and RNase 7. Apart from its immunomodulatory activities, it is also associated with protection of Borrelia spirochetes from antibody-mediated killing through its binding to OspC. In vivo, tests on different immune disease animal models show promising therapeutic results, e.g., in inhibiting HIV infection, experimental autoimmune encephalomyelitis, transplantation rejection, and asthma. (Microbial infection) Protects Borrelia garinii from anti-Borrelia antibody-mediated cytotoxicity in vitro. May facilitate B.garinii transmission in mouse model. In terms of biological role, (Microbial infection) Protects Borrelia burgdorferi from anti-Borrelia antibody-mediated cytotoxicity in vitro. Its function is as follows. (Microbial infection) Protects Borrelia afzelii from anti-Borrelia antibody-mediated cytotoxicity in vitro. The chain is Salivary protein 15 Iper-1 from Ixodes persulcatus (Taiga tick).